A 115-amino-acid chain; its full sequence is Large ribosomal subunit protein bL19 (115 aa).

This sequence belongs to the bacterial ribosomal protein bL19 family.

This protein is located at the 30S-50S ribosomal subunit interface and may play a role in the structure and function of the aminoacyl-tRNA binding site. The protein is Large ribosomal subunit protein bL19 of Finegoldia magna (strain ATCC 29328 / DSM 20472 / WAL 2508) (Peptostreptococcus magnus).